The primary structure comprises 86 residues: Large ribosomal subunit protein bL27 (86 aa).

Positions 1-23 (MAHKKAGGSTRNGRDSESKRLGV) are disordered.

It belongs to the bacterial ribosomal protein bL27 family.

The chain is Large ribosomal subunit protein bL27 from Alkalilimnicola ehrlichii (strain ATCC BAA-1101 / DSM 17681 / MLHE-1).